The following is a 286-amino-acid chain: Bifunctional protein FolD (286 aa).

NADP(+) contacts are provided by residues 165–167 and S190; that span reads GRS.

The protein belongs to the tetrahydrofolate dehydrogenase/cyclohydrolase family. Homodimer.

It carries out the reaction (6R)-5,10-methylene-5,6,7,8-tetrahydrofolate + NADP(+) = (6R)-5,10-methenyltetrahydrofolate + NADPH. It catalyses the reaction (6R)-5,10-methenyltetrahydrofolate + H2O = (6R)-10-formyltetrahydrofolate + H(+). The protein operates within one-carbon metabolism; tetrahydrofolate interconversion. Its function is as follows. Catalyzes the oxidation of 5,10-methylenetetrahydrofolate to 5,10-methenyltetrahydrofolate and then the hydrolysis of 5,10-methenyltetrahydrofolate to 10-formyltetrahydrofolate. The sequence is that of Bifunctional protein FolD from Paraburkholderia phytofirmans (strain DSM 17436 / LMG 22146 / PsJN) (Burkholderia phytofirmans).